A 191-amino-acid chain; its full sequence is MARSFAIAVICIVLIAGVTGQAPTSPPTATPAPPTPTTPPPAATPPPVSAPPPVTTSPPPVTTAPPPANPPPPVSSPPPASPPPATPPPVASPPPPVASPPPATPPPVATPPPAPLASPPAQVPAPAPTTKPDSPSPSPSSSPPLPSSDAPGPSTDSISPAPSPTDVNDQNGASKMVSSLVFGSVLVWFMI.

An N-terminal signal peptide occupies residues M1–G20. The disordered stretch occupies residues G20–G172. The residue at position 21 (Q21) is a Pyrrolidone carboxylic acid. A 4-hydroxyproline mark is found at P23, P26, P27, P31, and P33. The segment covering T24–P146 has biased composition (pro residues). P26, P27, P31, and P33 each carry an O-linked (Ara...) hydroxyproline glycan. Positions T155–G172 are enriched in polar residues. G172 carries GPI-anchor amidated glycine lipidation. The propeptide at A173–I191 is removed in mature form.

Belongs to the classical AGP family. In terms of processing, O-glycosylated on hydroxyprolines; noncontiguous hydroxylproline residues are glycosylated with arabinogalactan. As to expression, predominantly expressed in flowers and at a lower level in leaves and siliques.

The protein localises to the cell membrane. Proteoglycan that seems to be implicated in diverse developmental roles such as differentiation, cell-cell recognition, embryogenesis and programmed cell death. The protein is Classical arabinogalactan protein 9 (AGP9) of Arabidopsis thaliana (Mouse-ear cress).